Here is a 599-residue protein sequence, read N- to C-terminus: Cytadherence high molecular weight protein 3 (599 aa).

A compositionally biased stretch (polar residues) spans 220 to 236 (VQVDSGSQNHSFNNSPS). Residues 220–241 (VQVDSGSQNHSFNNSPSLKPPL) form a disordered region.

The protein localises to the cell projection. The protein resides in the attachment organelle membrane. Component of the cytoskeleton-like structure which stabilizes the shape of the wall-less mycoplasma. This cytoskeleton-like network of accessory proteins containing HMW proteins 1 to 5 allows the proper anchoring of cytadhesin proteins in the mycoplasmal membrane at the attachment organelle. Essential for successful surface parasitism. In Mycoplasma genitalium (strain ATCC 33530 / DSM 19775 / NCTC 10195 / G37) (Mycoplasmoides genitalium), this protein is Cytadherence high molecular weight protein 3 (hmw3).